The sequence spans 101 residues: uncharacterized protein (101 aa).

2 helical membrane-spanning segments follow: residues 3–23 (IVYEYAISTNWIWLYVWLFLF) and 39–59 (AFLSLPPIVSFALSVATLIFF).

The protein localises to the membrane. This is an uncharacterized protein from Saccharomyces cerevisiae (strain ATCC 204508 / S288c) (Baker's yeast).